The chain runs to 780 residues: MDEQAGPGVFFSNNHPGAGGAKGLGPLAEAAAAGDGAAAAGAARAQYSLPGILHFLQHEWARFEVERAQWEVERAELQAQIAFLQGERKGQENLKKDLVRRIKMLEYALKQERAKYHKLKYGTELNQGDMKPPSYDSDEGNETEVQPQQNSQLMWKQGRQLLRQYLQEVGYTDTILDVKSKRVRALLGFSSDVTDREDDKNQDSVINGTEAEVKETAMIGKSELTDSASVLDNFKFLESAAADVSDEDEDEDTDGRAKSVIDTSTIVRKKALPDTSEDRDTKEALKEFDFLVTSEEGDNESRSAGDGTDWEKEDQCLTPEAWNVDQGVISKLKEQYKKERKGKKGVKRPNRSKLQDMLANLRDVDELPSLQPSVGSPSRPSSSRLPEQELSRADEVEALTFPPSSGKSFIMGADEALESELGLGELAGLTVANEADSLAYDIANNKDALRKTWNPKFTLRSHFDGIRALAFHPIEPVLITASEDHTLKMWNLQKTAPAKKSTSLDVEPIYTFRAHKGPVLCVVMSSNGEQCYSGGTDGRIQSWSTTNPNVDPYDAYDPSVLRGPLLGHTDAVWGLAYSAAHQRLLSCSADGTLRLWNTTEVAPALSVFNDNQELGIPASVDLVSSDPSHMVASFSKGYTSIFNMETQQRVLTLESNVDSTSSSSCQINRVISHPTLPISITAHEDRHIKFYDNNTGKLIHSMVAHLEAVTSLAVDPNGLYLMSGSHDCSIRLWNLESKTCIQEFTAHRKKFEESIHDVAFHPSKCYIASAGADALAKVFV.

Positions L53–K120 form a coiled coil. The tract at residues F55–F63 is caveolin-binding. The disordered stretch occupies residues T123 to N150. The residue at position 137 (S137) is a Phosphoserine. Residues Q149–L166 are calmodulin-binding. T225 is subject to Phosphothreonine. Phosphoserine occurs at positions 227, 229, 245, and 259. Disordered stretches follow at residues D289–K312, E334–K353, and V364–R392. The span at N299–K312 shows a compositional bias: basic and acidic residues. Basic residues predominate over residues K338 to R351. WD repeat units follow at residues S461–K500, A514–Y553, G567–S606, S662–S701, A704–E743, and K750–V780.

The protein belongs to the WD repeat striatin family. As to quaternary structure, part of the core of STRIPAK complexes composed of PP2A catalytic and scaffolding subunits, the striatins (PP2A regulatory subunits), the striatin-associated proteins MOB4, STRIP1 and STRIP2, PDCD10 and members of the STE20 kinases, such as STK24 and STK26. Interacts with CTTNBP2; this interaction may regulate dendritic spine distribution of STRN. Activation of glutamate receptors weakens the interaction with CTTNBP2. In terms of tissue distribution, mainly expressed in brain but is also expressed at low levels in various tissues such as kidney, spleen, skeletal muscle and lung.

Its subcellular location is the cytoplasm. It localises to the membrane. It is found in the cell projection. The protein resides in the dendritic spine. In terms of biological role, calmodulin-binding scaffolding protein which is the center of the striatin-interacting phosphatase and kinase (STRIPAK) complexes. STRIPAK complexes have critical roles in protein (de)phosphorylation and are regulators of multiple signaling pathways including Hippo, MAPK, nuclear receptor and cytoskeleton remodeling. Different types of STRIPAK complexes are involved in a variety of biological processes such as cell growth, differentiation, apoptosis, metabolism and immune regulation. The polypeptide is Striatin (Strn) (Mus musculus (Mouse)).